Reading from the N-terminus, the 108-residue chain is UPF0060 membrane protein Spro_2289 (108 aa).

Transmembrane regions (helical) follow at residues 6–26, 31–51, 61–81, and 85–105; these read LLFFATALAEIIGCFLPYLWL, SAWLLLPAAASLMLFVWLLTL, AAYGGVYVATALLWLRVVDGV, and ALDWLGAGVALAGMLIIVSGW.

The protein belongs to the UPF0060 family.

It localises to the cell inner membrane. This Serratia proteamaculans (strain 568) protein is UPF0060 membrane protein Spro_2289.